Here is a 626-residue protein sequence, read N- to C-terminus: MKAQSEPRFDYVKIAIASPERIRQWGERTLPNGTVVGEVTKPETINYRTLKPEMDGLFCEKIFGPSKDWECWCGKYKRVRHRGIVCERCGVEVTESRVRRHRMGYIKLAAPVTHVWYLKGIPSYLSILLDMALRDVEQIVYFNAYVVLNPGNASNLQYKQLLTEDQWVEIEDQIYAEDSELEGIEVGIGAEAVQRLLAELQLEEVAEKLREEILASKGQKRAKLIKRLRVIDNFIATHSQAEWMTLDVIPVIPPDLRPMVQLDGGRFATSDLNDLYRRVINRNNRLARLQEILAPEIIVRNEKRMLQEAVDALIDNGRRGRTVVGANNRALKSLSDIIEGKQGRFRQNLLGKRVDYSGRSVIVVGPNLKIYQCGLPREMAIELFQPFVIHRLIKLGIVNNIKAAKKLILKGDPQIWSVLEEVITGHPVMLNRAPTLHRLGIQAFEPILVEGRAIQLHPLVCPAFNADFDGDQMAVHVPLSLEAQCEARLLMLACHNVLSPATGKPIVAPSQDMVLGCYYLTAENPNAQKGAGRYFAGIEDALRAYDHGQVDLHSQIWIRHLDEDVVTEKPDTEVIKTEDLGDGTVMKYYRERKIREGVDGEIITQYIQTTPGRIIYNKTIAEALVF.

The Zn(2+) site is built by Cys-71, Cys-73, Cys-86, and Cys-89. Asp-467, Asp-469, and Asp-471 together coordinate Mg(2+).

Belongs to the RNA polymerase beta' chain family. RpoC1 subfamily. In terms of assembly, in cyanobacteria the RNAP catalytic core is composed of 2 alpha, 1 beta, 1 beta', 1 gamma and 1 omega subunit. When a sigma factor is associated with the core the holoenzyme is formed, which can initiate transcription. Requires Mg(2+) as cofactor. The cofactor is Zn(2+).

The catalysed reaction is RNA(n) + a ribonucleoside 5'-triphosphate = RNA(n+1) + diphosphate. Functionally, DNA-dependent RNA polymerase catalyzes the transcription of DNA into RNA using the four ribonucleoside triphosphates as substrates. This Synechocystis sp. (strain ATCC 27184 / PCC 6803 / Kazusa) protein is DNA-directed RNA polymerase subunit gamma.